The following is a 1152-amino-acid chain: Nardilysin (1152 aa).

The N-terminal stretch at 1 to 20 (MLRKVTVAAVCATRRKLCEA) is a signal peptide. Disordered regions lie at residues 81-108 (LGAD…KSPS) and 133-208 (MEGK…KKTT). Residues serine 86, serine 94, and serine 96 each carry the phosphoserine modification. The span at 141 to 198 (TDDEEEEEVEEEEEDDDEDSGAEIEDDDEEGFDDEDEFDDEHDDDLDTEDNELEELEE) shows a compositional bias: acidic residues. Zn(2+) is bound at residue histidine 234. The Proton acceptor role is filled by glutamate 237. Positions 238 and 315 each coordinate Zn(2+).

It belongs to the peptidase M16 family. In terms of assembly, interacts with BACE1 and NRG1. The cofactor is Zn(2+).

It localises to the mitochondrion. The protein resides in the cell projection. It is found in the dendrite. It catalyses the reaction Hydrolysis of polypeptides, preferably at -Xaa-|-Arg-Lys-, and less commonly at -Arg-|-Arg-Xaa-, in which Xaa is not Arg or Lys.. Cleaves peptide substrates on the N-terminus of arginine residues in dibasic pairs. Is a critical activator of BACE1- and ADAM17-mediated pro-neuregulin ectodomain shedding, involved in the positive regulation of axonal maturation and myelination. Required for proper functioning of 2-oxoglutarate dehydrogenase (OGDH). In Pongo abelii (Sumatran orangutan), this protein is Nardilysin.